The chain runs to 377 residues: Pseudouridylate synthase RPUSD4, mitochondrial (377 aa).

A disordered region spans residues 51–70 (LRAQKQQQKTKEPAPTNPVQ). The active site involves aspartate 153.

It belongs to the pseudouridine synthase RluA family. Interacts with 16S mt-rRNA, mt-tRNA(Phe) and mt-tRNA(Met). Forms a regulatory protein-RNA complex, consisting of RCC1L, NGRN, RPUSD3, RPUSD4, TRUB2, FASTKD2 and 16S mt-rRNA.

It localises to the mitochondrion matrix. Its subcellular location is the nucleus. The protein localises to the cytoplasm. The catalysed reaction is uridine in 5S rRNA = pseudouridine in 5S rRNA. It catalyses the reaction a uridine in tRNA = a pseudouridine in tRNA. The enzyme catalyses a uridine in mRNA = a pseudouridine in mRNA. In terms of biological role, catalyzes uridine to pseudouridine isomerization (pseudouridylation) of different mitochondrial RNA substrates. Acts on position 1397 in 16S mitochondrial ribosomal RNA (16S mt-rRNA). This modification is required for the assembly of 16S mt-rRNA into a functional mitochondrial ribosome. As a component of a functional protein-RNA module, consisting of RCC1L, NGRN, RPUSD3, RPUSD4, TRUB2, FASTKD2 and 16S mt-rRNA, controls 16S mt-rRNA abundance and is required for intra-mitochondrial translation. Acts on position 39 in mitochondrial tRNA(Phe). Also catalyzes pseudouridylation of mRNAs in nucleus: acts as a regulator of pre-mRNA splicing by mediating pseudouridylation of pre-mRNAs at locations associated with alternatively spliced regions. Pseudouridylation of pre-mRNAs near splice sites directly regulates mRNA splicing and mRNA 3'-end processing. In Bos taurus (Bovine), this protein is Pseudouridylate synthase RPUSD4, mitochondrial.